The following is a 773-amino-acid chain: Circadian clock protein PASD1 (773 aa).

Residues 30-102 (YDYFNQVTLQ…IILKFPLLNS (73 aa)) enclose the PAS domain. Positions 313-361 (SVDQEGPMDQQDPENPVAPLDQAGLMDPVDPEDSVDLGAAGASAQPLQP) are disordered. Residues 365 to 412 (VAYDIISQELELMKKLKEQLEERTWLLHDAIQNQQNALELMMDHLQKQ) are necessary for transcriptional repression. Residues 365 to 412 (VAYDIISQELELMKKLKEQLEERTWLLHDAIQNQQNALELMMDHLQKQ) adopt a coiled-coil conformation. Disordered stretches follow at residues 427-448 (SEAVPKKQQKQHAGQVKRPLPH), 506-569 (QRKV…QLQE), and 732-773 (GVEG…NKPC). Residues 475–553 (VAFNQQQLVQ…QERKKWQGQM (79 aa)) adopt a coiled-coil conformation. A compositionally biased stretch (basic and acidic residues) spans 506–536 (QRKVQKQKKMQEKKKLQEQKMQEKKKLQEQR).

Interacts with the CLOCK-BMAL1 heterodimer; this interaction inhibits CLOCK-BMAL1 transcriptional activation and suppress circadian timekeeping. Interacts with BMAL1. As to expression, testis-specific. Expressed in a broad range of cancer cells, including melanoma, lung cancer, and breast cancer (at protein level). Testis-specific. Found in histologically normal tissues from patients with uterus, lung and small intestine cancers. Widespread expression seen in solid tumors and diffuse large B-cell lymphoma (DLBCL)-derived cell lines. Isoform 2 is expressed in all DLBCL-derived cell lines, while isoform 1 is preferentially expressed in cell lines derived from non-germinal center DLBCL.

The protein localises to the nucleus. Its function is as follows. Functions as a suppressor of the biological clock that drives the daily circadian rhythms of cells throughout the body. Acts as a nuclear repressor of the CLOCK-BMAL1 heterodimer-mediated transcriptional activation of the core clock components. Inhibits circadian clock function in cancer cells, when overexpressed. This Homo sapiens (Human) protein is Circadian clock protein PASD1.